A 424-amino-acid polypeptide reads, in one-letter code: Deoxyguanosinetriphosphate triphosphohydrolase-like protein (424 aa).

Residues 1-27 form a disordered region; the sequence is MYPYSDADAFRRQPERAKSSQLRTSAV. Over residues 8 to 18 the composition is skewed to basic and acidic residues; the sequence is DAFRRQPERAK. One can recognise an HD domain in the interval 67-217; it reads RLTHSLEVAQ…MDFSDDIAYS (151 aa).

It belongs to the dGTPase family. Type 2 subfamily.

The polypeptide is Deoxyguanosinetriphosphate triphosphohydrolase-like protein (dgt) (Corynebacterium glutamicum (strain ATCC 13032 / DSM 20300 / JCM 1318 / BCRC 11384 / CCUG 27702 / LMG 3730 / NBRC 12168 / NCIMB 10025 / NRRL B-2784 / 534)).